The primary structure comprises 274 residues: Dermonecrotic toxin SdSicTox-betaIIB1bvii (274 aa).

His-5 is an active-site residue. Residues Glu-25 and Asp-27 each coordinate Mg(2+). The Nucleophile role is filled by His-41. 2 cysteine pairs are disulfide-bonded: Cys-45/Cys-51 and Cys-47/Cys-190. Asp-85 contributes to the Mg(2+) binding site.

Belongs to the arthropod phospholipase D family. Class II subfamily. It depends on Mg(2+) as a cofactor. In terms of tissue distribution, expressed by the venom gland.

The protein localises to the secreted. The catalysed reaction is an N-(acyl)-sphingosylphosphocholine = an N-(acyl)-sphingosyl-1,3-cyclic phosphate + choline. It carries out the reaction an N-(acyl)-sphingosylphosphoethanolamine = an N-(acyl)-sphingosyl-1,3-cyclic phosphate + ethanolamine. The enzyme catalyses a 1-acyl-sn-glycero-3-phosphocholine = a 1-acyl-sn-glycero-2,3-cyclic phosphate + choline. It catalyses the reaction a 1-acyl-sn-glycero-3-phosphoethanolamine = a 1-acyl-sn-glycero-2,3-cyclic phosphate + ethanolamine. Its function is as follows. Dermonecrotic toxins cleave the phosphodiester linkage between the phosphate and headgroup of certain phospholipids (sphingolipid and lysolipid substrates), forming an alcohol (often choline) and a cyclic phosphate. This toxin acts on sphingomyelin (SM). It may also act on ceramide phosphoethanolamine (CPE), lysophosphatidylcholine (LPC) and lysophosphatidylethanolamine (LPE), but not on lysophosphatidylserine (LPS), and lysophosphatidylglycerol (LPG). It acts by transphosphatidylation, releasing exclusively cyclic phosphate products as second products. Induces dermonecrosis, hemolysis, increased vascular permeability, edema, inflammatory response, and platelet aggregation. The polypeptide is Dermonecrotic toxin SdSicTox-betaIIB1bvii (Sicarius cf. damarensis (strain GJB-2008) (Six-eyed sand spider)).